The following is a 212-amino-acid chain: MKAFTRLTGLVCPLDRANVDTDAIIPKQFLKSIQRSGFGPNLFDEWRYLDHGEPGMDNSIRPQNPDFVLNFPRYQGAQILLARENFGCGSSREHAPWALDDYGFRVVIAPSFADIFFNNCYKNGLLPIVLPAEVMDRLFAGCEASEGYRLTVDLAAQTVTTPQGDSFGFDITEHRKHCLLNGLDEIGLTLRHAGEIKAFEDNRRQTQPWLFR.

This sequence belongs to the LeuD family. LeuD type 1 subfamily. In terms of assembly, heterodimer of LeuC and LeuD.

The enzyme catalyses (2R,3S)-3-isopropylmalate = (2S)-2-isopropylmalate. The protein operates within amino-acid biosynthesis; L-leucine biosynthesis; L-leucine from 3-methyl-2-oxobutanoate: step 2/4. In terms of biological role, catalyzes the isomerization between 2-isopropylmalate and 3-isopropylmalate, via the formation of 2-isopropylmaleate. This is 3-isopropylmalate dehydratase small subunit from Laribacter hongkongensis (strain HLHK9).